Here is a 358-residue protein sequence, read N- to C-terminus: Probable protein phosphatase 2C 34 (358 aa).

Residues 62-349 (LASVFSRRGE…DDISAVCLFF (288 aa)) form the PPM-type phosphatase domain. Mn(2+) is bound by residues aspartate 98, glycine 99, aspartate 294, and aspartate 340.

This sequence belongs to the PP2C family. Mg(2+) is required as a cofactor. It depends on Mn(2+) as a cofactor.

The catalysed reaction is O-phospho-L-seryl-[protein] + H2O = L-seryl-[protein] + phosphate. The enzyme catalyses O-phospho-L-threonyl-[protein] + H2O = L-threonyl-[protein] + phosphate. The sequence is that of Probable protein phosphatase 2C 34 from Arabidopsis thaliana (Mouse-ear cress).